A 185-amino-acid polypeptide reads, in one-letter code: MDSLQNHLLIAMPSLKDTFFERSVIYLCEHNEQGAMGLMINRPIGVDVNELLRQMELDDFHTIESINSKVLVGGPVGQEKGFVLHTPQPQWSNSQQISDDLMLTTSRDVLTSLGSKEAPEQFIVALGYAGWGRHQLEQELADNTWLSIPANIDLMFNTDHESRWQKATESLGFDIWQLSSQAGHA.

Belongs to the UPF0301 (AlgH) family.

The polypeptide is UPF0301 protein Shew_1144 (Shewanella loihica (strain ATCC BAA-1088 / PV-4)).